Reading from the N-terminus, the 278-residue chain is 3-methyl-2-oxobutanoate hydroxymethyltransferase 1 (278 aa).

Positions 49 and 88 each coordinate Mg(2+). 3-methyl-2-oxobutanoate contacts are provided by residues 49-50 (DS), D88, and K118. E120 is a binding site for Mg(2+). E187 acts as the Proton acceptor in catalysis.

The protein belongs to the PanB family. In terms of assembly, homodecamer; pentamer of dimers. It depends on Mg(2+) as a cofactor.

Its subcellular location is the cytoplasm. It catalyses the reaction 3-methyl-2-oxobutanoate + (6R)-5,10-methylene-5,6,7,8-tetrahydrofolate + H2O = 2-dehydropantoate + (6S)-5,6,7,8-tetrahydrofolate. The protein operates within cofactor biosynthesis; (R)-pantothenate biosynthesis; (R)-pantoate from 3-methyl-2-oxobutanoate: step 1/2. In terms of biological role, catalyzes the reversible reaction in which hydroxymethyl group from 5,10-methylenetetrahydrofolate is transferred onto alpha-ketoisovalerate to form ketopantoate. The polypeptide is 3-methyl-2-oxobutanoate hydroxymethyltransferase 1 (Hahella chejuensis (strain KCTC 2396)).